The sequence spans 432 residues: Patatin-like phospholipase domain-containing protein 5 (432 aa).

The PNPLA domain occupies 12–181 (LSFSGSGYMG…SNNLPFSDCP (170 aa)). The short motif at 16–21 (GSGYMG) is the GXGXXG element. A GXSXG motif is present at residues 47–51 (GSSSG). Catalysis depends on Ser-49, which acts as the Nucleophile. The active-site Proton acceptor is the Asp-168. Positions 168-170 (DGA) match the DGA/G motif. Positions 404 to 423 (ADSGLLRQQRGTAPSGNRPL) are disordered.

It carries out the reaction a triacylglycerol + H2O = a diacylglycerol + a fatty acid + H(+). Its function is as follows. Has abundant triacylglycerol lipase activity. The protein is Patatin-like phospholipase domain-containing protein 5 of Mus musculus (Mouse).